The sequence spans 508 residues: Cytochrome P450 4A12 (508 aa).

Helical transmembrane passes span 10 to 30 and 120 to 140; these read IFPG…VLLL and FLAP…WFQH. Heme is bound at residue E319. The residue at position 438 (S438) is a Phosphoserine. C455 contributes to the heme binding site.

It belongs to the cytochrome P450 family. Requires heme as cofactor. In terms of tissue distribution, expressed at proximal straight tubules and preglomerular arteries of the outer medulla as well in the cortex regions of kidney (at protein level).

The protein resides in the endoplasmic reticulum membrane. Its subcellular location is the microsome membrane. The enzyme catalyses an organic molecule + reduced [NADPH--hemoprotein reductase] + O2 = an alcohol + oxidized [NADPH--hemoprotein reductase] + H2O + H(+). It carries out the reaction dodecanoate + reduced [NADPH--hemoprotein reductase] + O2 = 12-hydroxydodecanoate + oxidized [NADPH--hemoprotein reductase] + H2O + H(+). It catalyses the reaction dodecanoate + reduced [NADPH--hemoprotein reductase] + O2 = (11R)-hydroxydodecanoate + oxidized [NADPH--hemoprotein reductase] + H2O + H(+). The catalysed reaction is (5Z,8Z,11Z,14Z)-eicosatetraenoate + reduced [NADPH--hemoprotein reductase] + O2 = 20-hydroxy-(5Z,8Z,11Z,14Z)-eicosatetraenoate + oxidized [NADPH--hemoprotein reductase] + H2O + H(+). The enzyme catalyses prostaglandin A1 + reduced [NADPH--hemoprotein reductase] + O2 = 20-hydroxy prostaglandin A1 + oxidized [NADPH--hemoprotein reductase] + H2O + H(+). Its pathway is lipid metabolism; fatty acid metabolism. With respect to regulation, activated by cytochrome b5 and phosphatidylserine. Its function is as follows. A cytochrome P450 monooxygenase involved in the metabolism of fatty acids. Catalyzes predominantly the oxidation of the terminal carbon (omega-oxidation) of saturated and unsaturated fatty acids. May act as a major omega-hydroxylase for dodecanoic (lauric) acid in kidney. At preglomerular arteries, may participate in omega-hydroxylation of (5Z,8Z,11Z,14Z)-eicosatetraenoic acid (arachidonate) to 20-hydroxyeicosatetraenoic acid (20-HETE), a signaling molecule acting both as vasoconstrictive and natriuretic with overall effect on arterial blood pressure. Can also catalyze the oxidation of the penultimate carbon (omega-1 oxidation) of fatty acids with lower efficiency, displaying a preference for the (R)-stereoisomer. Mechanistically, uses molecular oxygen inserting one oxygen atom into a substrate, and reducing the second into a water molecule, with two electrons provided by NADPH via cytochrome P450 reductase (NADPH--hemoprotein reductase). The chain is Cytochrome P450 4A12 (Cyp4a12) from Rattus norvegicus (Rat).